The following is a 607-amino-acid chain: Pogo transposable element with KRAB domain (607 aa).

Positions 8 to 29 (LNLTLKEEQKEEEVEIQELEDG) form a coiled coil. A Glycyl lysine isopeptide (Lys-Gly) (interchain with G-Cter in SUMO2) cross-link involves residue Lys-13. Positions 47 to 118 (ALFDEVAIYF…DEWRLQGVTF (72 aa)) constitute a KRAB domain. Residues 250–323 (AFRGPKNGRF…MRRYDLSLRH (74 aa)) form the HTH CENPB-type domain. Residues 355 to 567 (YEVAQMGNAD…ISSESIVQGF (213 aa)) form the DDE-1 domain. Lys-384 is covalently cross-linked (Glycyl lysine isopeptide (Lys-Gly) (interchain with G-Cter in SUMO2)). The segment at 588–607 (GELPKEPPKECGPESVAEGD) is disordered. Over residues 589–599 (ELPKEPPKECG) the composition is skewed to basic and acidic residues.

The protein localises to the nucleus. The chain is Pogo transposable element with KRAB domain (Pogk) from Mus musculus (Mouse).